Reading from the N-terminus, the 487-residue chain is 3-octaprenyl-4-hydroxybenzoate carboxy-lyase (487 aa).

N172 serves as a coordination point for Mn(2+). Prenylated FMN-binding positions include I175–R177, R189–L191, and R194–G195. E238 lines the Mn(2+) pocket. The active-site Proton donor is D287.

This sequence belongs to the UbiD family. Homohexamer. It depends on prenylated FMN as a cofactor. Requires Mn(2+) as cofactor.

Its subcellular location is the cell membrane. It carries out the reaction a 4-hydroxy-3-(all-trans-polyprenyl)benzoate + H(+) = a 2-(all-trans-polyprenyl)phenol + CO2. Its pathway is cofactor biosynthesis; ubiquinone biosynthesis. Functionally, catalyzes the decarboxylation of 3-octaprenyl-4-hydroxy benzoate to 2-octaprenylphenol, an intermediate step in ubiquinone biosynthesis. The chain is 3-octaprenyl-4-hydroxybenzoate carboxy-lyase from Actinobacillus pleuropneumoniae serotype 3 (strain JL03).